A 250-amino-acid chain; its full sequence is Pyridoxine 5'-phosphate synthase (250 aa).

Positions 8 and 19 each coordinate 3-amino-2-oxopropyl phosphate. His44 acts as the Proton acceptor in catalysis. 1-deoxy-D-xylulose 5-phosphate is bound by residues Arg46 and His51. The active-site Proton acceptor is the Glu76. A 1-deoxy-D-xylulose 5-phosphate-binding site is contributed by Thr106. The active-site Proton donor is the His200. 3-amino-2-oxopropyl phosphate is bound by residues Asp201 and 223 to 224 (GH).

This sequence belongs to the PNP synthase family. Homooctamer; tetramer of dimers.

The protein resides in the cytoplasm. It catalyses the reaction 3-amino-2-oxopropyl phosphate + 1-deoxy-D-xylulose 5-phosphate = pyridoxine 5'-phosphate + phosphate + 2 H2O + H(+). The protein operates within cofactor biosynthesis; pyridoxine 5'-phosphate biosynthesis; pyridoxine 5'-phosphate from D-erythrose 4-phosphate: step 5/5. Its function is as follows. Catalyzes the complicated ring closure reaction between the two acyclic compounds 1-deoxy-D-xylulose-5-phosphate (DXP) and 3-amino-2-oxopropyl phosphate (1-amino-acetone-3-phosphate or AAP) to form pyridoxine 5'-phosphate (PNP) and inorganic phosphate. The protein is Pyridoxine 5'-phosphate synthase of Rhizobium meliloti (strain 1021) (Ensifer meliloti).